A 101-amino-acid polypeptide reads, in one-letter code: NADH-quinone oxidoreductase subunit K (101 aa).

A run of 3 helical transmembrane segments spans residues 4 to 24 (LSHY…GIFL), 30 to 50 (IVLL…FIAF), and 61 to 81 (VFVF…LAIL).

Belongs to the complex I subunit 4L family. As to quaternary structure, NDH-1 is composed of 14 different subunits. Subunits NuoA, H, J, K, L, M, N constitute the membrane sector of the complex.

It is found in the cell inner membrane. It carries out the reaction a quinone + NADH + 5 H(+)(in) = a quinol + NAD(+) + 4 H(+)(out). In terms of biological role, NDH-1 shuttles electrons from NADH, via FMN and iron-sulfur (Fe-S) centers, to quinones in the respiratory chain. The immediate electron acceptor for the enzyme in this species is believed to be ubiquinone. Couples the redox reaction to proton translocation (for every two electrons transferred, four hydrogen ions are translocated across the cytoplasmic membrane), and thus conserves the redox energy in a proton gradient. This is NADH-quinone oxidoreductase subunit K from Methylovorus glucosotrophus (strain SIP3-4).